The chain runs to 227 residues: Prolactin-5A1 (227 aa).

Positions 1-27 (MQIQPHPSGALLLLLLSNLLMWENVAS) are cleaved as a signal peptide. A glycan (N-linked (GlcNAc...) asparagine) is linked at Asn-47. A disulfide bridge links Cys-85 with Cys-204.

Belongs to the somatotropin/prolactin family. As to expression, expressed specifically in placenta. Highly expressed in invasive trophoblast cells lining the central placental vessel.

It localises to the secreted. The protein is Prolactin-5A1 (Prl5a1) of Rattus norvegicus (Rat).